We begin with the raw amino-acid sequence, 414 residues long: MSYYDTIFSKHIDKIKSEGRYREFKALKRQADNFPFAEHANKQIVMWCINDYLGMSKHAKVMQASIDALLKYGVGSGGTRNIGGNNIAILELEKELADLHKKQAALVFTSGFVANDTTLASLAKIMPDIVFFSDELNHASIIAGVTSSRAEKYIYRHLDVKHLEELLQSVDINRPKIIVFESAYSMDGFFSPIKDIINLAKKYNALTFIDEVHTVGLYGKHGGGIAELLNCSDQIDIIQGTLAKAYGTIGGYITSNHNLVDAIRLTAPGFIFTTSLPPVISTAATHSIRHLKESNEERIKHQEVVTKLKNSFENFNIPYLKNESHIVPIIIGDPIKAASASNMLLNKYGIYVQHINFPTVPRGTERLRIIPTPAHTDKMINDLSIALVHIFAELDIELSSTKELNEEIRLNLIA.

3 residues coordinate substrate: arginine 22, serine 133, and lysine 152. Serine 185, histidine 213, and threonine 241 together coordinate pyridoxal 5'-phosphate. The active site involves lysine 244. The residue at position 244 (lysine 244) is an N6-(pyridoxal phosphate)lysine. Pyridoxal 5'-phosphate contacts are provided by threonine 273 and threonine 274. Threonine 359 is a substrate binding site.

The protein belongs to the class-II pyridoxal-phosphate-dependent aminotransferase family. Homodimer. It depends on pyridoxal 5'-phosphate as a cofactor.

It carries out the reaction succinyl-CoA + glycine + H(+) = 5-aminolevulinate + CO2 + CoA. Its pathway is porphyrin-containing compound metabolism; protoporphyrin-IX biosynthesis; 5-aminolevulinate from glycine: step 1/1. The polypeptide is 5-aminolevulinate synthase (hemA) (Rickettsia felis (strain ATCC VR-1525 / URRWXCal2) (Rickettsia azadi)).